We begin with the raw amino-acid sequence, 101 residues long: Large ribosomal subunit protein eL43 (101 aa).

C40, C43, C59, and C62 together coordinate Zn(2+). A C4-type zinc finger spans residues 40 to 62 (CPSCRSLVRLERIAFGIWRCPKC).

This sequence belongs to the eukaryotic ribosomal protein eL43 family. Putative zinc-binding subfamily. In terms of assembly, part of the 50S ribosomal subunit. Requires Zn(2+) as cofactor.

Binds to the 23S rRNA. This Pyrobaculum aerophilum (strain ATCC 51768 / DSM 7523 / JCM 9630 / CIP 104966 / NBRC 100827 / IM2) protein is Large ribosomal subunit protein eL43.